Here is a 162-residue protein sequence, read N- to C-terminus: Ribosomal RNA large subunit methyltransferase H (162 aa).

S-adenosyl-L-methionine-binding residues include Leu78 and Gly110.

This sequence belongs to the RNA methyltransferase RlmH family. In terms of assembly, homodimer.

It localises to the cytoplasm. The enzyme catalyses pseudouridine(1915) in 23S rRNA + S-adenosyl-L-methionine = N(3)-methylpseudouridine(1915) in 23S rRNA + S-adenosyl-L-homocysteine + H(+). Specifically methylates the pseudouridine at position 1915 (m3Psi1915) in 23S rRNA. In Bradyrhizobium sp. (strain ORS 278), this protein is Ribosomal RNA large subunit methyltransferase H.